A 360-amino-acid chain; its full sequence is Chorismate synthase (360 aa).

Arg-46 is a binding site for NADP(+). Residues 123–125 (RSS), 235–236 (NA), Gly-275, 290–294 (KPTPS), and Arg-316 contribute to the FMN site.

Belongs to the chorismate synthase family. Homotetramer. It depends on FMNH2 as a cofactor.

The catalysed reaction is 5-O-(1-carboxyvinyl)-3-phosphoshikimate = chorismate + phosphate. The protein operates within metabolic intermediate biosynthesis; chorismate biosynthesis; chorismate from D-erythrose 4-phosphate and phosphoenolpyruvate: step 7/7. Its function is as follows. Catalyzes the anti-1,4-elimination of the C-3 phosphate and the C-6 proR hydrogen from 5-enolpyruvylshikimate-3-phosphate (EPSP) to yield chorismate, which is the branch point compound that serves as the starting substrate for the three terminal pathways of aromatic amino acid biosynthesis. This reaction introduces a second double bond into the aromatic ring system. This Wolinella succinogenes (strain ATCC 29543 / DSM 1740 / CCUG 13145 / JCM 31913 / LMG 7466 / NCTC 11488 / FDC 602W) (Vibrio succinogenes) protein is Chorismate synthase.